A 228-amino-acid polypeptide reads, in one-letter code: Ribose-5-phosphate isomerase A (228 aa).

Residues 27 to 30 (TGTT), 86 to 89 (DGAD), and 100 to 103 (KGGG) contribute to the substrate site. Catalysis depends on Glu109, which acts as the Proton acceptor. Residue Lys127 participates in substrate binding.

The protein belongs to the ribose 5-phosphate isomerase family. In terms of assembly, homodimer.

It catalyses the reaction aldehydo-D-ribose 5-phosphate = D-ribulose 5-phosphate. It functions in the pathway carbohydrate degradation; pentose phosphate pathway; D-ribose 5-phosphate from D-ribulose 5-phosphate (non-oxidative stage): step 1/1. In terms of biological role, catalyzes the reversible conversion of ribose-5-phosphate to ribulose 5-phosphate. The chain is Ribose-5-phosphate isomerase A from Borrelia hermsii (strain HS1 / DAH).